The sequence spans 773 residues: Lon protease homolog 2, peroxisomal (773 aa).

Residues 9-198 (LPVIVVDSGV…MCEKWMQMQR (190 aa)) form the Lon N-terminal domain. Position 336-343 (336-343 (GPPGIGKT)) interacts with ATP. One can recognise a Lon proteolytic domain in the interval 587–766 (PLPPGVCFGL…EDVIEAMMEK (180 aa)). Active-site residues include Ser672 and Lys715. The Microbody targeting signal signature appears at 771–773 (AKL).

The protein belongs to the peptidase S16 family.

The protein localises to the peroxisome matrix. It carries out the reaction Hydrolysis of proteins in presence of ATP.. ATP-dependent serine protease that mediates the selective degradation of misfolded and unassembled polypeptides in the peroxisomal matrix. Necessary for type 2 peroxisome targeting signal (PTS2)-containing protein processing and facilitates peroxisome matrix protein import. The sequence is that of Lon protease homolog 2, peroxisomal from Caenorhabditis briggsae.